Here is a 183-residue protein sequence, read N- to C-terminus: Capsid protein (183 aa).

The segment at N136 to C183 is disordered. Positions V149–S176 are enriched in basic residues. Residues S155, S162, and S170 each carry the phosphoserine; by host modification. Residues S155–T160 form a 1; half-length repeat. A 3 X 7 AA repeats of S-P-R-R-R-[PR]-S region spans residues S155–S176. Positions R158–R175 match the Bipartite nuclear localization signal motif. Tandem repeats lie at residues S162 to S168 and S170 to S176. Residues Q177–C183 are RNA binding.

Belongs to the orthohepadnavirus core antigen family. Homodimerizes, then multimerizes. Interacts with cytosol exposed regions of viral L glycoprotein present in the reticulum-to-Golgi compartment. Interacts with human FLNB. Phosphorylated form interacts with host importin alpha; this interaction depends on the exposure of the NLS, which itself depends upon genome maturation and/or phosphorylation of the capsid protein. Interacts with host NUP153. In terms of processing, phosphorylated by host SRPK1, SRPK2, and maybe protein kinase C or GAPDH. Phosphorylation is critical for pregenomic RNA packaging. Protein kinase C phosphorylation is stimulated by HBx protein and may play a role in transport of the viral genome to the nucleus at the late step during the viral replication cycle.

It localises to the virion. Its subcellular location is the host cytoplasm. Self assembles to form an icosahedral capsid. Most capsids appear to be large particles with an icosahedral symmetry of T=4 and consist of 240 copies of capsid protein, though a fraction forms smaller T=3 particles consisting of 180 capsid proteins. Entering capsids are transported along microtubules to the nucleus. Phosphorylation of the capsid is thought to induce exposure of nuclear localization signal in the C-terminal portion of the capsid protein that allows binding to the nuclear pore complex via the importin (karyopherin-) alpha and beta. Capsids are imported in intact form through the nuclear pore into the nuclear basket, where it probably binds NUP153. Only capsids that contain the mature viral genome can release the viral DNA and capsid protein into the nucleoplasm. Immature capsids get stuck in the basket. Capsids encapsulate the pre-genomic RNA and the P protein. Pre-genomic RNA is reverse-transcribed into DNA while the capsid is still in the cytoplasm. The capsid can then either be directed to the nucleus, providing more genomes for transcription, or bud through the endoplasmic reticulum to provide new virions. This Homo sapiens (Human) protein is Capsid protein.